Consider the following 295-residue polypeptide: Bifunctional protein FolD (295 aa).

Residues 166–168, Ser191, and Ile232 each bind NADP(+); that span reads GRS.

This sequence belongs to the tetrahydrofolate dehydrogenase/cyclohydrolase family. In terms of assembly, homodimer.

It carries out the reaction (6R)-5,10-methylene-5,6,7,8-tetrahydrofolate + NADP(+) = (6R)-5,10-methenyltetrahydrofolate + NADPH. The catalysed reaction is (6R)-5,10-methenyltetrahydrofolate + H2O = (6R)-10-formyltetrahydrofolate + H(+). The protein operates within one-carbon metabolism; tetrahydrofolate interconversion. Its function is as follows. Catalyzes the oxidation of 5,10-methylenetetrahydrofolate to 5,10-methenyltetrahydrofolate and then the hydrolysis of 5,10-methenyltetrahydrofolate to 10-formyltetrahydrofolate. The sequence is that of Bifunctional protein FolD from Rhodopseudomonas palustris (strain BisB18).